The sequence spans 172 residues: Ribosome maturation factor RimM (172 aa).

Residues 96 to 168 (EGEFYYHQII…RVDVELMEGL (73 aa)) enclose the PRC barrel domain.

Belongs to the RimM family. In terms of assembly, binds ribosomal protein uS19.

The protein resides in the cytoplasm. Functionally, an accessory protein needed during the final step in the assembly of 30S ribosomal subunit, possibly for assembly of the head region. Essential for efficient processing of 16S rRNA. May be needed both before and after RbfA during the maturation of 16S rRNA. It has affinity for free ribosomal 30S subunits but not for 70S ribosomes. This is Ribosome maturation factor RimM from Streptococcus pyogenes serotype M3 (strain ATCC BAA-595 / MGAS315).